We begin with the raw amino-acid sequence, 562 residues long: Terpene synthase 2 (562 aa).

Residues aspartate 315, aspartate 319, aspartate 459, and glutamate 467 each coordinate Mg(2+). A DDXXD motif motif is present at residues 315-319 (DDEYD).

This sequence belongs to the terpene synthase family. Tpsa subfamily. It depends on Mg(2+) as a cofactor. Mn(2+) is required as a cofactor. In terms of tissue distribution, expressed at low levels in stems, leaves, roots and fruits.

The catalysed reaction is (2E,6E)-farnesyl diphosphate = delta-cadinene + diphosphate. The enzyme catalyses (2E,6E)-farnesyl diphosphate = alpha-cadinene + diphosphate. It catalyses the reaction (2E,6E)-farnesyl diphosphate + H2O = (-)-delta-cadinol + diphosphate. Its pathway is secondary metabolite biosynthesis; terpenoid biosynthesis. Its function is as follows. Sesquiterpene synthase involved in the biosynthesis of volatile compounds that contribute to the characteristic flavors of black pepper. Mediates the conversion of (2E,6E)-farnesyl diphosphate (FPP) into alpha-cadinene, delta-cadinene and delta-cadinol. This Piper nigrum (Black pepper) protein is Terpene synthase 2.